A 373-amino-acid polypeptide reads, in one-letter code: 4-hydroxy-3-methylbut-2-en-1-yl diphosphate synthase (flavodoxin) (373 aa).

4 residues coordinate [4Fe-4S] cluster: Cys270, Cys273, Cys305, and Glu312.

It belongs to the IspG family. It depends on [4Fe-4S] cluster as a cofactor.

It carries out the reaction (2E)-4-hydroxy-3-methylbut-2-enyl diphosphate + oxidized [flavodoxin] + H2O + 2 H(+) = 2-C-methyl-D-erythritol 2,4-cyclic diphosphate + reduced [flavodoxin]. The protein operates within isoprenoid biosynthesis; isopentenyl diphosphate biosynthesis via DXP pathway; isopentenyl diphosphate from 1-deoxy-D-xylulose 5-phosphate: step 5/6. Its function is as follows. Converts 2C-methyl-D-erythritol 2,4-cyclodiphosphate (ME-2,4cPP) into 1-hydroxy-2-methyl-2-(E)-butenyl 4-diphosphate. This is 4-hydroxy-3-methylbut-2-en-1-yl diphosphate synthase (flavodoxin) from Sodalis glossinidius (strain morsitans).